The sequence spans 93 residues: Small ribosomal subunit protein bS18 (93 aa).

This sequence belongs to the bacterial ribosomal protein bS18 family. In terms of assembly, part of the 30S ribosomal subunit. Forms a tight heterodimer with protein bS6.

Binds as a heterodimer with protein bS6 to the central domain of the 16S rRNA, where it helps stabilize the platform of the 30S subunit. In Verminephrobacter eiseniae (strain EF01-2), this protein is Small ribosomal subunit protein bS18.